The sequence spans 92 residues: Small ribosomal subunit protein uS19c (92 aa).

This sequence belongs to the universal ribosomal protein uS19 family.

It is found in the plastid. The protein localises to the chloroplast. In terms of biological role, protein S19 forms a complex with S13 that binds strongly to the 16S ribosomal RNA. The chain is Small ribosomal subunit protein uS19c from Phaseolus angularis (Azuki bean).